Here is a 108-residue protein sequence, read N- to C-terminus: Nucleoid-associated protein BARBAKC583_1239 (108 aa).

This sequence belongs to the YbaB/EbfC family. As to quaternary structure, homodimer.

The protein resides in the cytoplasm. It localises to the nucleoid. Binds to DNA and alters its conformation. May be involved in regulation of gene expression, nucleoid organization and DNA protection. This Bartonella bacilliformis (strain ATCC 35685 / KC583 / Herrer 020/F12,63) protein is Nucleoid-associated protein BARBAKC583_1239.